The primary structure comprises 959 residues: Isoleucine--tRNA ligase (959 aa).

Positions 60-70 (PYANGSLHMGH) match the 'HIGH' region motif. Glu569 is a binding site for L-isoleucyl-5'-AMP. The 'KMSKS' region motif lies at 610–614 (KMSKS). Lys613 provides a ligand contact to ATP. Residues Cys928, Cys931, Cys948, and Cys951 each contribute to the Zn(2+) site.

This sequence belongs to the class-I aminoacyl-tRNA synthetase family. IleS type 1 subfamily. As to quaternary structure, monomer. The cofactor is Zn(2+).

The protein localises to the cytoplasm. It carries out the reaction tRNA(Ile) + L-isoleucine + ATP = L-isoleucyl-tRNA(Ile) + AMP + diphosphate. Functionally, catalyzes the attachment of isoleucine to tRNA(Ile). As IleRS can inadvertently accommodate and process structurally similar amino acids such as valine, to avoid such errors it has two additional distinct tRNA(Ile)-dependent editing activities. One activity is designated as 'pretransfer' editing and involves the hydrolysis of activated Val-AMP. The other activity is designated 'posttransfer' editing and involves deacylation of mischarged Val-tRNA(Ile). This chain is Isoleucine--tRNA ligase, found in Gloeothece citriformis (strain PCC 7424) (Cyanothece sp. (strain PCC 7424)).